Here is a 294-residue protein sequence, read N- to C-terminus: Putative glutamine amidotransferase HI_1037 (294 aa).

Cys18 is an active-site residue. Residues 18 to 266 form the Glutamine amidotransferase type-2 domain; that stretch reads CQLLGMNCNT…NGGFVFFKNG (249 aa).

This is Putative glutamine amidotransferase HI_1037 from Haemophilus influenzae (strain ATCC 51907 / DSM 11121 / KW20 / Rd).